The sequence spans 187 residues: Ribosome-recycling factor (187 aa).

It belongs to the RRF family.

Its subcellular location is the cytoplasm. Responsible for the release of ribosomes from messenger RNA at the termination of protein biosynthesis. May increase the efficiency of translation by recycling ribosomes from one round of translation to another. The chain is Ribosome-recycling factor from Parvibaculum lavamentivorans (strain DS-1 / DSM 13023 / NCIMB 13966).